Consider the following 142-residue polypeptide: Putative pre-16S rRNA nuclease (142 aa).

It belongs to the YqgF nuclease family.

The protein localises to the cytoplasm. Its function is as follows. Could be a nuclease involved in processing of the 5'-end of pre-16S rRNA. The chain is Putative pre-16S rRNA nuclease from Photobacterium profundum (strain SS9).